We begin with the raw amino-acid sequence, 373 residues long: tRNA-specific 2-thiouridylase MnmA (373 aa).

ATP-binding positions include Gly12–Ser19 and Met38. The interaction with target base in tRNA stretch occupies residues Asn98 to Asp100. Residue Cys103 is the Nucleophile of the active site. Cys103 and Cys200 are disulfide-bonded. Position 127 (Gly127) interacts with ATP. The tract at residues Lys150–Gln152 is interaction with tRNA. Cys200 serves as the catalytic Cysteine persulfide intermediate. Residues Arg312–Tyr313 form an interaction with tRNA region.

The protein belongs to the MnmA/TRMU family.

It localises to the cytoplasm. It carries out the reaction S-sulfanyl-L-cysteinyl-[protein] + uridine(34) in tRNA + AH2 + ATP = 2-thiouridine(34) in tRNA + L-cysteinyl-[protein] + A + AMP + diphosphate + H(+). Functionally, catalyzes the 2-thiolation of uridine at the wobble position (U34) of tRNA, leading to the formation of s(2)U34. In Streptococcus pneumoniae (strain Hungary19A-6), this protein is tRNA-specific 2-thiouridylase MnmA.